The chain runs to 100 residues: Aspartyl/glutamyl-tRNA(Asn/Gln) amidotransferase subunit C (100 aa).

It belongs to the GatC family. As to quaternary structure, heterotrimer of A, B and C subunits.

The enzyme catalyses L-glutamyl-tRNA(Gln) + L-glutamine + ATP + H2O = L-glutaminyl-tRNA(Gln) + L-glutamate + ADP + phosphate + H(+). It carries out the reaction L-aspartyl-tRNA(Asn) + L-glutamine + ATP + H2O = L-asparaginyl-tRNA(Asn) + L-glutamate + ADP + phosphate + 2 H(+). Allows the formation of correctly charged Asn-tRNA(Asn) or Gln-tRNA(Gln) through the transamidation of misacylated Asp-tRNA(Asn) or Glu-tRNA(Gln) in organisms which lack either or both of asparaginyl-tRNA or glutaminyl-tRNA synthetases. The reaction takes place in the presence of glutamine and ATP through an activated phospho-Asp-tRNA(Asn) or phospho-Glu-tRNA(Gln). This chain is Aspartyl/glutamyl-tRNA(Asn/Gln) amidotransferase subunit C, found in Streptococcus pneumoniae (strain Taiwan19F-14).